Here is a 1230-residue protein sequence, read N- to C-terminus: Potassium channel subfamily T member 1 (1230 aa).

The tract at residues 1-37 (MARAKLPRSPSEGKAGPGGAPAGAAAPEEPHGLSPLL) is disordered. Over 1–93 (MARAKLPRSP…LFFIKNQRSS (93 aa)) the chain is Cytoplasmic. Residues 94 to 126 (LRIRLFNFSLKLLTCLLYIVRVLLDDPALGIGC) traverse the membrane as a helical segment. Topologically, residues 127 to 153 (WGCPKQNYSFNDSSSEINWAPILWVER) are extracellular. Residues asparagine 133 and asparagine 137 are each glycosylated (N-linked (GlcNAc...) asparagine). Residues 154–178 (KMTLWAIQVIVAIISFLETMLLIYL) traverse the membrane as a helical segment. The Cytoplasmic segment spans residues 179 to 192 (SYKGNIWEQIFRVS). The chain crosses the membrane as a helical span at residues 193–208 (FVLEMINTLPFIITIF). Over 209-215 (WPPLRNL) the chain is Extracellular. Residues 216-233 (FIPVFLNCWLAKHALENM) form a helical membrane-spanning segment. Residues 234–246 (INDFHRAILRTQS) are Cytoplasmic-facing. Residues 247–274 (AMFNQVLILFCTLLCLVFTGTCGIQHLE) form a helical membrane-spanning segment. Topologically, residues 275–281 (RAGENLS) are extracellular. The pore-forming intramembrane region spans 282–302 (LLTSFYFCIVTFSTVGYGDVT). Positions 296 and 297 each coordinate K(+). The Extracellular segment spans residues 303-304 (PK). Residues 305–338 (IWPSQLLVVIMICVALVVLPLQFEELVYLWMERQ) traverse the membrane as a helical segment. The Cytoplasmic portion of the chain corresponds to 339–1230 (KSGGNYSRHR…NPETRDETQL (892 aa)). One can recognise an RCK N-terminal 1 domain in the interval 352–488 (EKHVVLCVSS…FHVKFADHVV (137 aa)). Na(+)-binding residues include leucine 513, histidine 516, serine 538, and asparagine 540. Residues 660–689 (TEHRPTQSGGGGGGSKLALPTENGSGSRRP) are disordered. Residues cysteine 758 and cysteine 759 each coordinate Zn(2+). Arginine 761 and lysine 764 together coordinate K(+). Na(+)-binding residues include arginine 761 and lysine 764. Cysteine 766 and histidine 768 together coordinate Zn(2+). Asparagine 769, tyrosine 771, tyrosine 777, and glycine 778 together coordinate K(+). Tyrosine 771 serves as a coordination point for Na(+). Position 779 (phenylalanine 779) interacts with Na(+). An RCK N-terminal 2 domain is found at 781-921 (NKLIIVSAET…QFRAKDSYSL (141 aa)). Positions 787, 818, 820, 842, and 865 each coordinate K(+). Disordered regions lie at residues 1048–1078 (EVKG…EHPL) and 1204–1230 (SSSQ…ETQL). A compositionally biased stretch (gly residues) spans 1057–1072 (AGTGGSSQGRHTGGGD). The span at 1204-1219 (SSSQSRKSSCSHKLSS) shows a compositional bias: low complexity.

This sequence belongs to the potassium channel family. Calcium-activated (TC 1.A.1.3) subfamily. KCa4.1/KCNT1 sub-subfamily. In terms of assembly, homotetramer; which constitutes the Na(+)-activated K(+) channel. Interacts with KCNT2; these heterodimer channels differ from the homomers in their unitary conductance, kinetic behavior, subcellular localization, and response to activation of protein kinase C. Interacts (via C-terminus) with FMR1; this interaction alters gating properties of KCNT1. Interacts with CRBN via its cytoplasmic C-terminus. In terms of processing, phosphorylated by protein kinase C. Phosphorylation of the C-terminal domain increases channel activity. As to expression, highest expression in liver, brain and spinal cord. Lowest expression in skeletal muscle.

It is found in the cell membrane. It carries out the reaction K(+)(in) = K(+)(out). With respect to regulation, activated by high intracellular Na(+). In addition to activation by Na(+), is cooperatively activated by intracellular Cl(-) levels. Inhibited by Zn(2+). Activated upon stimulation of G-protein coupled receptors, such as CHRM1 and GRIA1. Sodium-activated K(+) channel. Acts as an important mediator of neuronal membrane excitability. Contributes to the delayed outward currents. Regulates neuronal bursting in sensory neurons. Contributes to synaptic development and plasticity. The sequence is that of Potassium channel subfamily T member 1 from Homo sapiens (Human).